Consider the following 179-residue polypeptide: MAKTAMAYKEKMKELSMLSLICSCFYPEPRNMNIYKYDDMEVKQINKRASGQAFELILKPPSPVSEAPRTLASPKKKELSLEEIQKKLEAAEERRKSQEAQVLKHLAEKREHEREVLQKALEENNNFSKMAEEKLILKMEQIKENREANLAALIERLQEKERHAAEVRRNKELQVELSG.

The segment at 1–26 is membrane attachment; the sequence is MAKTAMAYKEKMKELSMLSLICSCFY. Phosphoserine occurs at positions 16, 50, 62, 73, 80, and 97. Residues 38–179 form the SLD domain; the sequence is DDMEVKQINK…NKELQVELSG (142 aa). The segment at 39–96 is regulatory/phosphorylation domain; it reads DMEVKQINKRASGQAFELILKPPSPVSEAPRTLASPKKKELSLEEIQKKLEAAEERRK. Residues 74–179 are a coiled coil; sequence PKKKELSLEE…NKELQVELSG (106 aa).

This sequence belongs to the stathmin family. As to expression, expression is neuron-specific and found in cerebellum, forebrain, midbrain, tectum and spinal cord.

It localises to the cytoplasm. Its subcellular location is the perinuclear region. The protein localises to the cell projection. It is found in the growth cone. The protein resides in the membrane. It localises to the axon. Its subcellular location is the lamellipodium. In terms of biological role, is a key regulator of neurite extension through regulation of microtubule instabilily. The chain is Stathmin-2 (STMN2) from Gallus gallus (Chicken).